A 370-amino-acid polypeptide reads, in one-letter code: uncharacterized protein (370 aa).

The N-terminal stretch at 1 to 27 (MSSAANEGCVYLFIVVLRLSSFSCVNS) is a signal peptide. N-linked (GlcNAc...) asparagine glycosylation is found at asparagine 59, asparagine 98, and asparagine 126. Disordered stretches follow at residues 81–101 (SRSHTKKADTRGTADGKNTTA) and 123–167 (LSEN…CHQP). The segment covering 139–148 (HDDDDDDDLE) has biased composition (acidic residues). 4 N-linked (GlcNAc...) asparagine glycosylation sites follow: asparagine 171, asparagine 221, asparagine 230, and asparagine 262.

This is an uncharacterized protein from Saccharomyces cerevisiae (strain ATCC 204508 / S288c) (Baker's yeast).